Consider the following 163-residue polypeptide: 2-C-methyl-D-erythritol 2,4-cyclodiphosphate synthase (163 aa).

D12 and H14 together coordinate a divalent metal cation. 4-CDP-2-C-methyl-D-erythritol 2-phosphate is bound by residues 12–14 and 38–39; these read DVH and HS. H46 contributes to the a divalent metal cation binding site. Residues 60–62, 65–69, 136–139, F143, and R146 contribute to the 4-CDP-2-C-methyl-D-erythritol 2-phosphate site; these read DIG, FPDTD, and TTTE.

Belongs to the IspF family. Homotrimer. A divalent metal cation serves as cofactor.

The enzyme catalyses 4-CDP-2-C-methyl-D-erythritol 2-phosphate = 2-C-methyl-D-erythritol 2,4-cyclic diphosphate + CMP. The protein operates within isoprenoid biosynthesis; isopentenyl diphosphate biosynthesis via DXP pathway; isopentenyl diphosphate from 1-deoxy-D-xylulose 5-phosphate: step 4/6. In terms of biological role, involved in the biosynthesis of isopentenyl diphosphate (IPP) and dimethylallyl diphosphate (DMAPP), two major building blocks of isoprenoid compounds. Catalyzes the conversion of 4-diphosphocytidyl-2-C-methyl-D-erythritol 2-phosphate (CDP-ME2P) to 2-C-methyl-D-erythritol 2,4-cyclodiphosphate (ME-CPP) with a corresponding release of cytidine 5-monophosphate (CMP). The polypeptide is 2-C-methyl-D-erythritol 2,4-cyclodiphosphate synthase (Acinetobacter baylyi (strain ATCC 33305 / BD413 / ADP1)).